The chain runs to 238 residues: Ribonuclease PH (238 aa).

Residues Arg-86 and 124-126 contribute to the phosphate site; that span reads GTR.

The protein belongs to the RNase PH family. As to quaternary structure, homohexameric ring arranged as a trimer of dimers.

The catalysed reaction is tRNA(n+1) + phosphate = tRNA(n) + a ribonucleoside 5'-diphosphate. Phosphorolytic 3'-5' exoribonuclease that plays an important role in tRNA 3'-end maturation. Removes nucleotide residues following the 3'-CCA terminus of tRNAs; can also add nucleotides to the ends of RNA molecules by using nucleoside diphosphates as substrates, but this may not be physiologically important. Probably plays a role in initiation of 16S rRNA degradation (leading to ribosome degradation) during starvation. This is Ribonuclease PH from Vibrio parahaemolyticus serotype O3:K6 (strain RIMD 2210633).